Consider the following 592-residue polypeptide: Aspartate--tRNA ligase (592 aa).

Glu173 serves as a coordination point for L-aspartate. The aspartate stretch occupies residues 197-200; it reads QLFK. An L-aspartate-binding site is contributed by Arg219. ATP-binding positions include 219–221 and Gln228; that span reads RDE. His448 provides a ligand contact to L-aspartate. Residue Glu482 coordinates ATP. L-aspartate is bound at residue Arg489. 534 to 537 is an ATP binding site; the sequence is GLDR.

It belongs to the class-II aminoacyl-tRNA synthetase family. Type 1 subfamily. Homodimer.

Its subcellular location is the cytoplasm. The enzyme catalyses tRNA(Asp) + L-aspartate + ATP = L-aspartyl-tRNA(Asp) + AMP + diphosphate. Catalyzes the attachment of L-aspartate to tRNA(Asp) in a two-step reaction: L-aspartate is first activated by ATP to form Asp-AMP and then transferred to the acceptor end of tRNA(Asp). The polypeptide is Aspartate--tRNA ligase (Shewanella baltica (strain OS223)).